The chain runs to 322 residues: 3-alpha-hydroxysteroid dehydrogenase (322 aa).

M1 is subject to Blocked amino end (Met). NADP(+) is bound by residues 20–24 and D50; that span reads GFGTT. Catalysis depends on Y55, which acts as the Proton donor. H117 contacts substrate. Residues 166–167, Q190, and 216–221 contribute to the NADP(+) site; these read SN and YCTLGS. Position 227 (W227) interacts with substrate. Position 270-280 (270-280) interacts with NADP(+); sequence RSFNAKRIKEL.

This sequence belongs to the aldo/keto reductase family. Monomer. In terms of tissue distribution, in brain, highest levels found in olfactory bulb. Moderate levels present in cerebellum, cerebral cortex, hypothalamus and pituitary. Low levels present in amygdala, brain stem, caudate putamen, cingulate cortex, hippocampus, midbrain, and thalamus.

The protein localises to the cytoplasm. It carries out the reaction a 3alpha-hydroxysteroid + NADP(+) = a 3-oxosteroid + NADPH + H(+). The enzyme catalyses a 3alpha-hydroxysteroid + NAD(+) = a 3-oxosteroid + NADH + H(+). With respect to regulation, potently inhibited by the nonsteroidal anti-inflammatory drugs (NSAID). Besides being a 3-alpha-hydroxysteroid dehydrogenase, the enzyme can accomplish diverse functions: as quinone reductase, as an aromatic alcohol dehydrogenase, as dihydrodiol dehydrogenase, and as 9-, 11-, and 15-hydroxyprostaglandin dehydrogenase. This Rattus norvegicus (Rat) protein is 3-alpha-hydroxysteroid dehydrogenase (Akr1c9).